We begin with the raw amino-acid sequence, 250 residues long: Pimeloyl-[acyl-carrier protein] methyl ester esterase (250 aa).

Residues Trp12, 71 to 72, and 138 to 142 contribute to the substrate site; these read SL and FVALQ. Ser71 (nucleophile) is an active-site residue. Catalysis depends on residues Asp202 and His230. Position 230 (His230) interacts with substrate.

This sequence belongs to the AB hydrolase superfamily. Carboxylesterase BioH family. As to quaternary structure, monomer.

The protein resides in the cytoplasm. It carries out the reaction 6-carboxyhexanoyl-[ACP] methyl ester + H2O = 6-carboxyhexanoyl-[ACP] + methanol + H(+). It functions in the pathway cofactor biosynthesis; biotin biosynthesis. Functionally, the physiological role of BioH is to remove the methyl group introduced by BioC when the pimeloyl moiety is complete. It allows to synthesize pimeloyl-ACP via the fatty acid synthetic pathway through the hydrolysis of the ester bonds of pimeloyl-ACP esters. The chain is Pimeloyl-[acyl-carrier protein] methyl ester esterase from Aromatoleum aromaticum (strain DSM 19018 / LMG 30748 / EbN1) (Azoarcus sp. (strain EbN1)).